An 87-amino-acid polypeptide reads, in one-letter code: Putative regulatory protein BCG9842_B1272 (87 aa).

The protein belongs to the RemA family.

This chain is Putative regulatory protein BCG9842_B1272, found in Bacillus cereus (strain G9842).